A 433-amino-acid polypeptide reads, in one-letter code: Type I acyl-CoA thioesterase mpaH (433 aa).

Residues 58–246 (HGVGLPKELY…VKARFDAAAD (189 aa)) are abhydrolase domain. Residue Val-60 participates in substrate binding. Catalysis depends on Ser-139, which acts as the Nucleophile. Phe-140 lines the substrate pocket. Catalysis depends on residues Asp-163 and His-365.

The protein belongs to the AB hydrolase superfamily. MpaH hydrolase family. Homodimer.

It localises to the peroxisome matrix. It catalyses the reaction mycophenolyl-CoA + H2O = mycophenolate + CoA + H(+). Its pathway is secondary metabolite biosynthesis; terpenoid biosynthesis. Type I acyl-CoA thioesterase; part of the gene cluster that mediates the biosynthesis of mycophenolic acid (MPA), the first isolated antibiotic natural product in the world obtained from a culture of Penicillium brevicompactum in 1893. MpaH acts as a peroxisomal acyl-CoA hydrolase that converts MPA-CoA into the final product MPA. The first step of the pathway is the synthesis of 5-methylorsellinic acid (5MOA) by the cytosolic polyketide synthase mpaC. 5MOA is then converted to the phthalide compound 5,7-dihydroxy-4,6-dimethylphthalide (DHMP) by the endoplasmic reticulum-bound cytochrome P450 monooxygenase mpaDE. MpaDE first catalyzes hydroxylation of 5-MOA to 4,6-dihydroxy-2-(hydroxymethyl)-3-methylbenzoic acid (DHMB). MpaDE then acts as a lactone synthase that catalyzes the ring closure to convert DHMB into DHMP. The next step is the prenylation of DHMP by the Golgi apparatus-associated prenyltransferase mpaA to yield farnesyl-DHMP (FDHMP). The ER-bound oxygenase mpaB then mediates the oxidative cleavage the C19-C20 double bond in FDHMP to yield FDHMP-3C via a mycophenolic aldehyde intermediate. The O-methyltransferase mpaG catalyzes the methylation of FDHMP-3C to yield MFDHMP-3C. After the cytosolic methylation of FDHMP-3C, MFDHMP-3C enters into peroxisomes probably via free diffusion due to its low molecular weight. Upon a peroxisomal CoA ligation reaction, catalyzed by a beta-oxidation component enzyme acyl-CoA ligase ACL891, MFDHMP-3C-CoA would then be restricted to peroxisomes for the following beta-oxidation pathway steps. The peroxisomal beta-oxidation machinery than converts MFDHMP-3C-CoA into MPA_CoA, via a beta-oxidation chain-shortening process. Finally mpaH acts as a peroxisomal acyl-CoA hydrolase with high substrate specificity toward MPA-CoA to release the final product MPA. The polypeptide is Type I acyl-CoA thioesterase mpaH (Penicillium roqueforti (strain FM164)).